The following is a 200-amino-acid chain: GTP cyclohydrolase-2 (200 aa).

Position 49-53 (49-53 (RVHSE)) interacts with GTP. Zn(2+) is bound by residues Cys54, Cys65, and Cys67. Residues Gln70, 92–94 (EGR), and Thr114 contribute to the GTP site. The active-site Proton acceptor is the Asp126. Arg128 functions as the Nucleophile in the catalytic mechanism. Residues Thr149 and Lys154 each coordinate GTP.

The protein belongs to the GTP cyclohydrolase II family. As to quaternary structure, homodimer. Requires Zn(2+) as cofactor.

It carries out the reaction GTP + 4 H2O = 2,5-diamino-6-hydroxy-4-(5-phosphoribosylamino)-pyrimidine + formate + 2 phosphate + 3 H(+). The protein operates within cofactor biosynthesis; riboflavin biosynthesis; 5-amino-6-(D-ribitylamino)uracil from GTP: step 1/4. Functionally, catalyzes the conversion of GTP to 2,5-diamino-6-ribosylamino-4(3H)-pyrimidinone 5'-phosphate (DARP), formate and pyrophosphate. The sequence is that of GTP cyclohydrolase-2 from Klebsiella pneumoniae subsp. pneumoniae (strain ATCC 700721 / MGH 78578).